A 185-amino-acid chain; its full sequence is Ribosome-recycling factor (185 aa).

It belongs to the RRF family.

The protein localises to the cytoplasm. Responsible for the release of ribosomes from messenger RNA at the termination of protein biosynthesis. May increase the efficiency of translation by recycling ribosomes from one round of translation to another. The polypeptide is Ribosome-recycling factor (Campylobacter hominis (strain ATCC BAA-381 / DSM 21671 / CCUG 45161 / LMG 19568 / NCTC 13146 / CH001A)).